The chain runs to 284 residues: Tropomyosin alpha-3 chain (284 aa).

Met1 is subject to N-acetylmethionine. A disordered region spans residues 1–43 (MEAIKKKMQMLKLDKENALDRAEQAEAEQKQAEERSKQLEDEL). Residues 1-284 (MEAIKKKMQM…DHALNDMTSI (284 aa)) adopt a coiled-coil conformation. At Glu2 the chain carries N-acetylalanine. Residues 12–40 (KLDKENALDRAEQAEAEQKQAEERSKQLE) are compositionally biased toward basic and acidic residues. Thr53 carries the phosphothreonine modification. Phosphoserine occurs at positions 61 and 87. At Thr108 the chain carries Phosphothreonine. Residues Ser206 and Ser215 each carry the phosphoserine modification. An N6-acetyllysine modification is found at Leu228. Thr252 is subject to Phosphothreonine. Tyr261 bears the Phosphotyrosine mark. Ser271 carries the post-translational modification Phosphoserine. A Phosphothreonine modification is found at Thr282. Ser283 bears the Phosphoserine mark.

It belongs to the tropomyosin family. Homodimer. Heterodimer of an alpha (TPM1, TPM3 or TPM4) and a beta (TPM2) chain. Interacts with TMOD1. Interacts with TNNT1.

The protein localises to the cytoplasm. Its subcellular location is the cytoskeleton. Functionally, binds to actin filaments in muscle and non-muscle cells. Plays a central role, in association with the troponin complex, in the calcium dependent regulation of vertebrate striated muscle contraction. Smooth muscle contraction is regulated by interaction with caldesmon. In non-muscle cells is implicated in stabilizing cytoskeleton actin filaments. The chain is Tropomyosin alpha-3 chain (TPM3) from Bos taurus (Bovine).